Here is a 39-residue protein sequence, read N- to C-terminus: MSDVGRVPLWMVATVGGLAAGGLLILFVFGSYSGLGSSL.

Residues 9–29 form a helical membrane-spanning segment; it reads LWMVATVGGLAAGGLLILFVF.

The protein belongs to the PsbJ family. PSII is composed of 1 copy each of membrane proteins PsbA, PsbB, PsbC, PsbD, PsbE, PsbF, PsbH, PsbI, PsbJ, PsbK, PsbL, PsbM, PsbT, PsbX, PsbY, PsbZ, Psb30/Ycf12, at least 3 peripheral proteins of the oxygen-evolving complex and a large number of cofactors. It forms dimeric complexes.

It localises to the plastid. Its subcellular location is the chloroplast thylakoid membrane. Its function is as follows. One of the components of the core complex of photosystem II (PSII). PSII is a light-driven water:plastoquinone oxidoreductase that uses light energy to abstract electrons from H(2)O, generating O(2) and a proton gradient subsequently used for ATP formation. It consists of a core antenna complex that captures photons, and an electron transfer chain that converts photonic excitation into a charge separation. The polypeptide is Photosystem II reaction center protein J (Emiliania huxleyi (Coccolithophore)).